The chain runs to 103 residues: MATYAIVKTGGKQYKVAVGDVVKIEKLDFEPGAKVSLPVTLVVDGATVTTNAKALAKVAVTGKVLEHTKGPKIRIHKFKNKTGYHKRQGHRQQLTVLKVTGIK.

This sequence belongs to the bacterial ribosomal protein bL21 family. Part of the 50S ribosomal subunit. Contacts protein L20.

In terms of biological role, this protein binds to 23S rRNA in the presence of protein L20. The protein is Large ribosomal subunit protein bL21 of Mycobacterium leprae (strain Br4923).